We begin with the raw amino-acid sequence, 470 residues long: Flotillin-like protein 1 (470 aa).

Cysteine 35 is lipidated: S-palmitoyl cysteine. Positions 305-354 form a coiled coil; the sequence is EYETKVQEANWELYNKQKQAEAVLYEKQKQAEAQKAQADAAFYSKQKEAE.

Belongs to the band 7/mec-2 family. Flotillin subfamily. May be palmitoylated.

The protein localises to the cell membrane. The protein resides in the membrane. It localises to the caveola. In terms of biological role, may act as a scaffolding protein within caveolar membranes, functionally participating in formation of caveolae or caveolae-like vesicles. This is Flotillin-like protein 1 (FLOT1) from Arabidopsis thaliana (Mouse-ear cress).